The following is a 383-amino-acid chain: Acetylornithine deacetylase (383 aa).

His80 lines the Zn(2+) pocket. Residue Asp82 is part of the active site. Asp112 contributes to the Zn(2+) binding site. The active site involves Glu144. Zn(2+) contacts are provided by Glu145, Glu169, and His355.

It belongs to the peptidase M20A family. ArgE subfamily. Homodimer. It depends on Zn(2+) as a cofactor. Co(2+) serves as cofactor. Requires glutathione as cofactor.

The protein localises to the cytoplasm. It catalyses the reaction N(2)-acetyl-L-ornithine + H2O = L-ornithine + acetate. It participates in amino-acid biosynthesis; L-arginine biosynthesis; L-ornithine from N(2)-acetyl-L-ornithine (linear): step 1/1. Catalyzes the hydrolysis of the amide bond of N(2)-acetylated L-amino acids. Cleaves the acetyl group from N-acetyl-L-ornithine to form L-ornithine, an intermediate in L-arginine biosynthesis pathway, and a branchpoint in the synthesis of polyamines. In Shigella dysenteriae serotype 1 (strain Sd197), this protein is Acetylornithine deacetylase.